The following is a 611-amino-acid chain: Rho-related BTB domain-containing protein 3 (611 aa).

Residues 1-175 are rho-like; that stretch reads MSIHIVALGN…KELGATYLEL (175 aa). BTB domains follow at residues 254 to 356 and 420 to 487; these read VDVV…QWEE and ADVV…CPAG. The segment at 420–611 is interaction with Rab9; the sequence is ADVVFEIQGA…HSRKCRCLVM (192 aa).

Interacts with RAB9A and RAB9B (at lower level compared to RAB9A-binding). Interacts with M6PRBP1/TIP47.

It is found in the golgi apparatus. Functionally, rab9-regulated ATPase required for endosome to Golgi transport. Involved in transport vesicle docking at the Golgi complex, possibly by participating in release M6PRBP1/TIP47 from vesicles to permit their efficient docking and fusion at the Golgi. Specifically binds Rab9, but not other Rab proteins. Has low intrinsic ATPase activity due to autoinhibition, which is relieved by Rab9. In Mus musculus (Mouse), this protein is Rho-related BTB domain-containing protein 3 (Rhobtb3).